The primary structure comprises 793 residues: MMAALYPSTDLSGASSSSLPSSPSSSSPNEVMALKDVREVKEENTLNEKLFLLACDKGDYYMVKKILEENSSGDLNINCVDVLGRNAVTITIENENLDILQLLLDYGCQSADALLVAIDSEVVGAVDILLNHRPKRSSRPTIVKLMERIQNPEYSTTMDVAPVILAAHRNNYEILTMLLKQDVSLPKPHAVGCECTLCSAKNKKDSLRHSRFRLDIYRCLASPALIMLTEEDPILRAFELSADLKELSLVEVEFRNDYEELARQCKMFAKDLLAQARNSRELEVILNHTSSDEPLDKRGLLEERMNLSRLKLAIKYNQKEFVSQSNCQQFLNTVWFGQMSGYRRKPTCKKIMTVLTVGIFWPVLSLCYLIAPKSQFGRIIHTPFMKFIIHGASYFTFLLLLNLYSLVYNEDKKNTMGPALERIDYLLILWIIGMIWSDIKRLWYEGLEDFLEESRNQLSFVMNSLYLATFALKVVAHNKFHDFADRKDWDAFHPTLVAEGLFAFANVLSYLRLFFMYTTSSILGPLQISMGQMLQDFGKFLGMFLLVLFSFTIGLTQLYDKGYTSKEQKDCVGIFCEQQSNDTFHSFIGTCFALFWYIFSLAHVAIFVTRFSYGEELQSFVGAVIVGTYNVVVVIVLTKLLVAMLHKSFQLIANHEDKEWKFARAKLWLSYFDDKCTLPPPFNIIPSPKTICYMISSLSKWICSHTSKGKVKRQNSLKEWRNLKQKRDENYQKVMCCLVHRYLTSMRQKMQSTDQATVENLNELRQDLSKFRNEIRDLLGFRTSKYAMFYPRN.

Residues 1-30 are disordered; it reads MMAALYPSTDLSGASSSSLPSSPSSSSPNE. At 1–345 the chain is on the cytoplasmic side; sequence MMAALYPSTD…FGQMSGYRRK (345 aa). Residues 15–28 are compositionally biased toward low complexity; it reads SSSSLPSSPSSSSP. 4 ANK repeats span residues 46–75, 83–109, 111–156, and 158–180; these read LNEK…SGDL, LGRN…YGCQ, ADAL…EYST, and MDVA…MLLK. Zn(2+) contacts are provided by His-189, Cys-193, Cys-195, and Cys-198. Residues 346–379 constitute an intramembrane region (discontinuously helical); sequence PTCKKIMTVLTVGIFWPVLSLCYLIAPKSQFGRI. Topologically, residues 380–386 are cytoplasmic; it reads IHTPFMK. A helical transmembrane segment spans residues 387–404; that stretch reads FIIHGASYFTFLLLLNLY. The Extracellular segment spans residues 405 to 422; sequence SLVYNEDKKNTMGPALER. The chain crosses the membrane as a helical span at residues 423-439; that stretch reads IDYLLILWIIGMIWSDI. The Cytoplasmic portion of the chain corresponds to 440–455; sequence KRLWYEGLEDFLEESR. The chain crosses the membrane as a helical span at residues 456 to 475; it reads NQLSFVMNSLYLATFALKVV. Residues 476–496 lie on the Extracellular side of the membrane; the sequence is AHNKFHDFADRKDWDAFHPTL. Residues 497–517 form a helical membrane-spanning segment; it reads VAEGLFAFANVLSYLRLFFMY. The Cytoplasmic segment spans residues 518–536; it reads TTSSILGPLQISMGQMLQD. Residues 537-558 form a helical membrane-spanning segment; sequence FGKFLGMFLLVLFSFTIGLTQL. At 559–623 the chain is on the extracellular side; sequence YDKGYTSKEQ…GEELQSFVGA (65 aa). Cys-571 and Cys-576 are disulfide-bonded. A helical transmembrane segment spans residues 624–644; it reads VIVGTYNVVVVIVLTKLLVAM. The Cytoplasmic portion of the chain corresponds to 645-793; sequence LHKSFQLIAN…SKYAMFYPRN (149 aa).

It belongs to the transient receptor (TC 1.A.4) family. STrpC subfamily. TRPC1 sub-subfamily. In terms of assembly, heterotetramer with TRPC4 and/or TRPC5. Forms a heteromeric ion channel with TRPC4, with a 1:3 TRPC1:TRPC4 stoichiometry. Unlike other TRP channel proteins, does not form a homomeric channel. Interacts with TRPC4AP. Interacts with ITPR3. Interacts with MX1 and RNF24. Interacts with FKBP4. Interacts with PLSCR1. Interacts with PKD2L2. Forms a heterotetramer with PKD2 with a 2:2 stoichiometry; has distinct channel properties separate from PKD2 or TRPC1 homomers alone. As to quaternary structure, interacts with isoform 2 of TRPC3. Post-translationally, activation of PRKCA induces phosphorylation of TRPC1 and subsequent Ca2+ entry into cells. As to expression, seems to be ubiquitous.

The protein resides in the cell membrane. It carries out the reaction Ca(2+)(in) = Ca(2+)(out). The catalysed reaction is Na(+)(in) = Na(+)(out). The enzyme catalyses Li(+)(in) = Li(+)(out). It catalyses the reaction Cs(+)(in) = Cs(+)(out). Its activity is regulated as follows. May be operated by a phosphatidylinositol second messenger system activated by receptor tyrosine kinases or G-protein coupled receptors. Also activated by intracellular calcium store depletion. Inhibited by xanthine-based inhibitor Pico145. Forms a receptor-activated non-selective calcium permeant cation channel. Forms a heteromeric ion channel with TRPC4 or TRPC5 that has reduced calcium permeability compared to the homomeric TRPC4 or TRPC5 channel. Also permeable to monovalent ions including sodium, lithium and cesium ions. In terms of biological role, forms a receptor-activated non-selective calcium permeant cation channel. Also activated by intracellular calcium store depletion. In Homo sapiens (Human), this protein is Short transient receptor potential channel 1 (TRPC1).